Reading from the N-terminus, the 193-residue chain is MSTMLIAVILLTLLALFFGVLLGFAALKFKVEGNPIVDELEAILPQTQCGQCGYPGCRPYAEAIANGDKVNKCPPGGTATMEKLASLMGVEPEPLNAEAQSQVKKVAYIREDECIGCTKCIQACPVDAIIGAGKLMHTVLTADCTGCDLCVEPCPVDCIDMLPVGQNLKNWNWRLNAIPVTLIQETPHEEKRG.

The hydrophobic stretch occupies residues 1–26 (MSTMLIAVILLTLLALFFGVLLGFAA). The 59-residue stretch at 32–90 (EGNPIVDELEAILPQTQCGQCGYPGCRPYAEAIANGDKVNKCPPGGTATMEKLASLMGV) folds into the 4Fe-4S domain. [4Fe-4S] cluster is bound by residues cysteine 49, cysteine 52, cysteine 57, cysteine 73, cysteine 114, cysteine 117, cysteine 120, cysteine 124, cysteine 144, cysteine 147, cysteine 150, and cysteine 154. 2 4Fe-4S ferredoxin-type domains span residues 105 to 134 (KVAYIREDECIGCTKCIQACPVDAIIGAGK) and 136 to 164 (MHTVLTADCTGCDLCVEPCPVDCIDMLPV).

Belongs to the 4Fe4S bacterial-type ferredoxin family. RnfB subfamily. The complex is composed of six subunits: RnfA, RnfB, RnfC, RnfD, RnfE and RnfG. [4Fe-4S] cluster serves as cofactor.

Its subcellular location is the cell inner membrane. Part of a membrane-bound complex that couples electron transfer with translocation of ions across the membrane. The sequence is that of Ion-translocating oxidoreductase complex subunit B from Shewanella sp. (strain MR-4).